A 468-amino-acid polypeptide reads, in one-letter code: MSSGKIAQVVGPVVDVMFASGDKLPEINNALIVYKDSDKKQKIVLEVALELGDGMVRTIAMESTDGLTRGLEVLDTGRAISVPVGKETLGRVFNVLGETIDLEEPFAEDVDRQPIHKKAPSFDELSTSSEILETGIKVIDLLAPYLKGGKVGLFGGAGVGKTVLIQELIHNIAQEHGGISVFTGVGERTREGNDLYWEMKESGVIEKTAMVFGQMNEPPGARMRVALTGLTIAEYFRDVESQDVLLFIDNIFRFTQAGSEVSALLGRMPSAVGYQPTLATEMGQLQERITSTQKGSVTSIQAIYVPADDYTDPAPATAFAHLDSTTNLERKLTQMGIYPAVDPLASSSRALSPEIVGEEHYAVATEVQRVLQRYRELQDIIAILGMDELSDEEKTLVGRARRIQFFLSQNFNVAEQFTGLPGSYVPVAETVRGFKEILEGKYDHLPEDAFRSVGPIEDVIKKAEKMGF.

155–162 contributes to the ATP binding site; the sequence is GGAGVGKT.

Belongs to the ATPase alpha/beta chains family. F-type ATPases have 2 components, CF(1) - the catalytic core - and CF(0) - the membrane proton channel. CF(1) has five subunits: alpha(3), beta(3), gamma(1), delta(1), epsilon(1). CF(0) has three main subunits: a(1), b(2) and c(9-12). The alpha and beta chains form an alternating ring which encloses part of the gamma chain. CF(1) is attached to CF(0) by a central stalk formed by the gamma and epsilon chains, while a peripheral stalk is formed by the delta and b chains.

It localises to the cell membrane. The enzyme catalyses ATP + H2O + 4 H(+)(in) = ADP + phosphate + 5 H(+)(out). In terms of biological role, produces ATP from ADP in the presence of a proton gradient across the membrane. The catalytic sites are hosted primarily by the beta subunits. This is ATP synthase subunit beta from Streptococcus pyogenes serotype M49 (strain NZ131).